Consider the following 267-residue polypeptide: Undecaprenyl-diphosphatase (267 aa).

Helical transmembrane passes span 1–21, 39–59, 83–103, 111–131, 144–164, 189–209, 218–238, and 245–265; these read MSYF…FLPI, QGLA…VIYF, AKLA…GLLM, LRSA…LWWV, TGWK…IPGT, FLMS…KLVT, FLLT…HFFL, and GMTP…AFLL.

It belongs to the UppP family.

The protein resides in the cell inner membrane. The catalysed reaction is di-trans,octa-cis-undecaprenyl diphosphate + H2O = di-trans,octa-cis-undecaprenyl phosphate + phosphate + H(+). Catalyzes the dephosphorylation of undecaprenyl diphosphate (UPP). Confers resistance to bacitracin. The sequence is that of Undecaprenyl-diphosphatase from Vibrio parahaemolyticus serotype O3:K6 (strain RIMD 2210633).